The sequence spans 323 residues: NADH-ubiquinone oxidoreductase chain 1 (323 aa).

Helical transmembrane passes span 8 to 28 (LINP…LTLI), 75 to 95 (MFLI…APLP), 105 to 125 (LGIL…LGSG), 151 to 171 (LGLI…TTLM), 177 to 197 (MWLI…TLAE), 234 to 254 (ANIL…SSFM), 258 to 278 (ELTT…FLWV), and 298 to 318 (FLPI…SMLG).

The protein belongs to the complex I subunit 1 family. In terms of assembly, core subunit of respiratory chain NADH dehydrogenase (Complex I) which is composed of 45 different subunits.

Its subcellular location is the mitochondrion inner membrane. The enzyme catalyses a ubiquinone + NADH + 5 H(+)(in) = a ubiquinol + NAD(+) + 4 H(+)(out). Functionally, core subunit of the mitochondrial membrane respiratory chain NADH dehydrogenase (Complex I) which catalyzes electron transfer from NADH through the respiratory chain, using ubiquinone as an electron acceptor. Essential for the catalytic activity and assembly of complex I. This Xenopus laevis (African clawed frog) protein is NADH-ubiquinone oxidoreductase chain 1 (mt-nd1).